The following is a 206-amino-acid chain: Transcriptional regulator GfcR (206 aa).

This sequence belongs to the purine/pyrimidine phosphoribosyltransferase family. GfcR subfamily.

This is Transcriptional regulator GfcR from Methanosphaerula palustris (strain ATCC BAA-1556 / DSM 19958 / E1-9c).